The sequence spans 338 residues: DNA-directed RNA polymerase subunit alpha (338 aa).

Residues Met-1 to Asp-233 form an alpha N-terminal domain (alpha-NTD) region. Residues Ile-250–Leu-338 are alpha C-terminal domain (alpha-CTD).

It belongs to the RNA polymerase alpha chain family. Homodimer. The RNAP catalytic core consists of 2 alpha, 1 beta, 1 beta' and 1 omega subunit. When a sigma factor is associated with the core the holoenzyme is formed, which can initiate transcription.

It catalyses the reaction RNA(n) + a ribonucleoside 5'-triphosphate = RNA(n+1) + diphosphate. In terms of biological role, DNA-dependent RNA polymerase catalyzes the transcription of DNA into RNA using the four ribonucleoside triphosphates as substrates. The sequence is that of DNA-directed RNA polymerase subunit alpha from Syntrophotalea carbinolica (strain DSM 2380 / NBRC 103641 / GraBd1) (Pelobacter carbinolicus).